Here is a 294-residue protein sequence, read N- to C-terminus: Cytidine deaminase (294 aa).

CMP/dCMP-type deaminase domains lie at asparagine 48–lysine 168 and aspartate 187–leucine 294. Asparagine 89–glutamate 91 lines the substrate pocket. Histidine 102 contacts Zn(2+). The active-site Proton donor is the glutamate 104. Positions 129 and 132 each coordinate Zn(2+).

It belongs to the cytidine and deoxycytidylate deaminase family. As to quaternary structure, homodimer. Zn(2+) serves as cofactor.

The enzyme catalyses cytidine + H2O + H(+) = uridine + NH4(+). The catalysed reaction is 2'-deoxycytidine + H2O + H(+) = 2'-deoxyuridine + NH4(+). In terms of biological role, this enzyme scavenges exogenous and endogenous cytidine and 2'-deoxycytidine for UMP synthesis. The protein is Cytidine deaminase of Proteus mirabilis (strain HI4320).